Reading from the N-terminus, the 490-residue chain is Protein nucleotidyltransferase YdiU (490 aa).

The ATP site is built by G89, G91, R92, K112, D124, G125, R175, and R182. D251 (proton acceptor) is an active-site residue. The Mg(2+) site is built by N252 and D261. ATP is bound at residue D261.

Belongs to the SELO family. Mg(2+) serves as cofactor. Requires Mn(2+) as cofactor.

The enzyme catalyses L-seryl-[protein] + ATP = 3-O-(5'-adenylyl)-L-seryl-[protein] + diphosphate. It catalyses the reaction L-threonyl-[protein] + ATP = 3-O-(5'-adenylyl)-L-threonyl-[protein] + diphosphate. The catalysed reaction is L-tyrosyl-[protein] + ATP = O-(5'-adenylyl)-L-tyrosyl-[protein] + diphosphate. It carries out the reaction L-histidyl-[protein] + UTP = N(tele)-(5'-uridylyl)-L-histidyl-[protein] + diphosphate. The enzyme catalyses L-seryl-[protein] + UTP = O-(5'-uridylyl)-L-seryl-[protein] + diphosphate. It catalyses the reaction L-tyrosyl-[protein] + UTP = O-(5'-uridylyl)-L-tyrosyl-[protein] + diphosphate. Nucleotidyltransferase involved in the post-translational modification of proteins. It can catalyze the addition of adenosine monophosphate (AMP) or uridine monophosphate (UMP) to a protein, resulting in modifications known as AMPylation and UMPylation. The sequence is that of Protein nucleotidyltransferase YdiU from Vibrio vulnificus (strain CMCP6).